The sequence spans 272 residues: Cyanophycinase (272 aa).

Active-site charge relay system residues include serine 132, glutamate 150, and histidine 174.

Belongs to the peptidase S51 family.

It catalyses the reaction [L-4-(L-arginin-2-N-yl)aspartate](n) + H2O = [L-4-(L-arginin-2-N-yl)aspartate](n-1) + L-4-(L-arginin-2-N-yl)aspartate. Exopeptidase that catalyzes the hydrolytic cleavage of multi-L-arginyl-poly-L-aspartic acid (cyanophycin; a water-insoluble reserve polymer) into aspartate-arginine dipeptides. This Geminocystis herdmanii (strain PCC 6308) (Synechocystis sp. (strain PCC 6308)) protein is Cyanophycinase (cphB).